The sequence spans 590 residues: MERTYYCGEVPETAVGERVVLKGWVQKRRDLGGLIFIDLRDRTGIVQVVASPDVSAEALAAAERVRSEYVLSVEGTVVARAPETVNPNIATGSIEIQAERIEIINEAKTPPFSISDDTDAAEDVRLKYRYLDLRRPVMFQTLALRHKITKTVRDFLDSERFLEIETPMLTKSTPEGARDYLVPSRVHPGEFYALPQSPQIFKQLLMVGGVERYYQIARCFRDEDLRADRQPEFTQIDIEMSFIEQKDIMDLTERMMAAVVKAAKGIDIPRPFPRITYDEAMSRYGSDKPDIRFGLELVDVSEIVRNSAFQVFARAVKEGGQVKAINAKGAAPRYSRKDIDALGEFAGRYGAKGLAWLKAEGEELKGPIAKFFTDEEQAALRRALAVEDGDLLLFVADEKAIVAAALGALRLKLGKELGLIDEAKLAFLWVTDWPLLEYDEEEGRYYAAHHPFTMPVRDDIPLLETNPSAVRAQAYDLVLNGYELGGGSLRIFERDVQEKMFRALGFSEEEARRQFGFLLEAFEYGTPPHGGIALGLDRLVMLLAGRTNLRDTIAFPKTASASCLLTEAPGPVSDKQLEELHLAVVLPENE.

Residue E175 participates in L-aspartate binding. The tract at residues 199–202 is aspartate; sequence QIFK. R221 contacts L-aspartate. Residues 221–223 and Q230 contribute to the ATP site; that span reads RDE. H449 serves as a coordination point for L-aspartate. Position 483 (E483) interacts with ATP. R490 contributes to the L-aspartate binding site. An ATP-binding site is contributed by 535-538; that stretch reads GLDR.

Belongs to the class-II aminoacyl-tRNA synthetase family. Type 1 subfamily. In terms of assembly, homodimer.

It localises to the cytoplasm. It catalyses the reaction tRNA(Asp) + L-aspartate + ATP = L-aspartyl-tRNA(Asp) + AMP + diphosphate. In terms of biological role, catalyzes the attachment of L-aspartate to tRNA(Asp) in a two-step reaction: L-aspartate is first activated by ATP to form Asp-AMP and then transferred to the acceptor end of tRNA(Asp). The sequence is that of Aspartate--tRNA ligase from Geobacillus kaustophilus (strain HTA426).